Consider the following 77-residue polypeptide: Envelope small membrane protein (77 aa).

The Virion surface segment spans residues 1 to 15; the sequence is MFLRLIDDNGIVLNS. Residues 16-36 traverse the membrane as a helical segment; that stretch reads ILWLLVMIFFFVLAMTFIKLI. The Intravirion segment spans residues 37-77; that stretch reads QLCFTCHYFFSRTLYQPVYKIFLAYQDYMQIAPVPAEVLNV.

This sequence belongs to the alphacoronaviruses E protein family. Homopentamer. Interacts with membrane protein M in the budding compartment of the host cell, which is located between endoplasmic reticulum and the Golgi complex. Interacts with Nucleoprotein.

The protein resides in the host Golgi apparatus membrane. Its function is as follows. Plays a central role in virus morphogenesis and assembly. Acts as a viroporin and self-assembles in host membranes forming pentameric protein-lipid pores that allow ion transport. Also plays a role in the induction of apoptosis. This chain is Envelope small membrane protein, found in Homo sapiens (Human).